The following is a 416-amino-acid chain: Histidinol dehydrogenase (416 aa).

The NAD(+) site is built by Tyr117, Gln178, and Asn201. 3 residues coordinate substrate: Thr224, Gln246, and His249. 2 residues coordinate Zn(2+): Gln246 and His249. Active-site proton acceptor residues include Glu314 and His315. Residues His315, Asp348, Glu402, and His407 each contribute to the substrate site. Residue Asp348 participates in Zn(2+) binding. A Zn(2+)-binding site is contributed by His407.

It belongs to the histidinol dehydrogenase family. Requires Zn(2+) as cofactor.

The enzyme catalyses L-histidinol + 2 NAD(+) + H2O = L-histidine + 2 NADH + 3 H(+). It functions in the pathway amino-acid biosynthesis; L-histidine biosynthesis; L-histidine from 5-phospho-alpha-D-ribose 1-diphosphate: step 9/9. Catalyzes the sequential NAD-dependent oxidations of L-histidinol to L-histidinaldehyde and then to L-histidine. The chain is Histidinol dehydrogenase from Staphylococcus aureus (strain Mu50 / ATCC 700699).